Reading from the N-terminus, the 219-residue chain is Lipoprotein-releasing system ATP-binding protein LolD (219 aa).

One can recognise an ABC transporter domain in the interval 5–219; sequence LKAGDIFKTY…KVVMQDGVII (215 aa). 37–44 is a binding site for ATP; it reads GASGAGKS.

The protein belongs to the ABC transporter superfamily. Lipoprotein translocase (TC 3.A.1.125) family. The complex is composed of two ATP-binding proteins (LolD) and two transmembrane proteins (LolC and LolE).

It localises to the cell inner membrane. Its function is as follows. Part of the ABC transporter complex LolCDE involved in the translocation of mature outer membrane-directed lipoproteins, from the inner membrane to the periplasmic chaperone, LolA. Responsible for the formation of the LolA-lipoprotein complex in an ATP-dependent manner. This Cytophaga hutchinsonii (strain ATCC 33406 / DSM 1761 / CIP 103989 / NBRC 15051 / NCIMB 9469 / D465) protein is Lipoprotein-releasing system ATP-binding protein LolD.